The sequence spans 1892 residues: Alpha-2-macroglobulin (1892 aa).

Positions 1-23 are cleaved as a signal peptide; that stretch reads MKNIFRKFVFTIFVCLINLQLIA. A cross-link (isoglutamyl cysteine thioester (Cys-Gln)) is located at residues 1441–1444; sequence CTEQ.

Belongs to the protease inhibitor I39 (alpha-2-macroglobulin) family. Bacterial alpha-2-macroglobulin subfamily.

Functionally, protects the bacterial cell from host peptidases. This chain is Alpha-2-macroglobulin, found in Rickettsia conorii (strain ATCC VR-613 / Malish 7).